Consider the following 1031-residue polypeptide: Error-prone DNA polymerase (1031 aa).

The protein belongs to the DNA polymerase type-C family. DnaE2 subfamily.

The protein resides in the cytoplasm. It catalyses the reaction DNA(n) + a 2'-deoxyribonucleoside 5'-triphosphate = DNA(n+1) + diphosphate. Its function is as follows. DNA polymerase involved in damage-induced mutagenesis and translesion synthesis (TLS). It is not the major replicative DNA polymerase. The sequence is that of Error-prone DNA polymerase from Pseudomonas syringae pv. syringae (strain B728a).